A 116-amino-acid polypeptide reads, in one-letter code: uncharacterized protein (116 aa).

Residues 97 to 116 (AKGKGNEGREEAEEASGKSK) are disordered. The span at 100–116 (KGNEGREEAEEASGKSK) shows a compositional bias: basic and acidic residues.

The protein belongs to the UPF0440 family.

This is an uncharacterized protein from Pyrococcus horikoshii (strain ATCC 700860 / DSM 12428 / JCM 9974 / NBRC 100139 / OT-3).